The primary structure comprises 274 residues: Speedy protein C (274 aa).

The speedy/Ringo box; Required for CDK-binding stretch occupies residues 37 to 169 (HQEVQAFLSL…FHWAWTRDRR (133 aa)).

The protein belongs to the Speedy/Ringo family. In terms of assembly, interacts with CDK1 and CDK2. Interacts with AURKB. In terms of tissue distribution, expressed in a variety of tissues including bone marrow, kidney, small intestine, liver, placenta and testis.

Its subcellular location is the cytoplasm. In terms of biological role, promotes progression through the cell cycle via binding and activation of CDK1 and CDK2. Involved in the spindle-assembly checkpoint. Required for recruitment of MAD2L1, BUBR1 and BUB1 to kinetochores. Required for the correct localization of the active form of Aurora B in prometaphase. This is Speedy protein C from Homo sapiens (Human).